Here is a 353-residue protein sequence, read N- to C-terminus: MEVSREMLFEELDNYSYALEYYSQEPDAEENVYPGIVHWISLLLYALAFVLGIPGNAIVIWFMGFKWKKTVTTLWFLNLAIADFVFVLFLPLYISYVALSFHWPFGRWLCKLNSFIAQLNMFSSVFFLTVISLDRYIHLIHPGLSHPHRTLKNSLLVVLFVWLLASLLGGPTLYFRDTVEVNNRIICYNNFQEYELTLMRHHVLTWVKFLFGYLLPLLTMSSCYLCLIFKTKKQNILISSKHLWMILSVVIAFMVCWTPFHLFSIWELSIHHNSSFQNVLQGGIPLSTGLAFLNSCLNPILYVLISKKFQARFRASVAEVLKRSLWEASCSGTVSEQLRSAETKSLSLLETAQ.

Topologically, residues 1–41 (MEVSREMLFEELDNYSYALEYYSQEPDAEENVYPGIVHWIS) are extracellular. Asn-14 is a glycosylation site (N-linked (GlcNAc...) asparagine). The helical transmembrane segment at 42 to 62 (LLLYALAFVLGIPGNAIVIWF) threads the bilayer. At 63–73 (MGFKWKKTVTT) the chain is on the cytoplasmic side. The helical transmembrane segment at 74–94 (LWFLNLAIADFVFVLFLPLYI) threads the bilayer. Topologically, residues 95-112 (SYVALSFHWPFGRWLCKL) are extracellular. A disulfide bridge links Cys-110 with Cys-187. Residues 113–133 (NSFIAQLNMFSSVFFLTVISL) traverse the membrane as a helical segment. Residues 134 to 154 (DRYIHLIHPGLSHPHRTLKNS) lie on the Cytoplasmic side of the membrane. The helical transmembrane segment at 155 to 175 (LLVVLFVWLLASLLGGPTLYF) threads the bilayer. At 176 to 210 (RDTVEVNNRIICYNNFQEYELTLMRHHVLTWVKFL) the chain is on the extracellular side. A helical membrane pass occupies residues 211–231 (FGYLLPLLTMSSCYLCLIFKT). At 232 to 247 (KKQNILISSKHLWMIL) the chain is on the cytoplasmic side. The chain crosses the membrane as a helical span at residues 248-268 (SVVIAFMVCWTPFHLFSIWEL). Over 269–286 (SIHHNSSFQNVLQGGIPL) the chain is Extracellular. Residues 287–307 (STGLAFLNSCLNPILYVLISK) form a helical membrane-spanning segment. Residues 308–353 (KFQARFRASVAEVLKRSLWEASCSGTVSEQLRSAETKSLSLLETAQ) lie on the Cytoplasmic side of the membrane.

It belongs to the chemokine-like receptor (CMKLR) family.

The protein localises to the cell membrane. In terms of biological role, receptor for chemoattractant adipokine chemerin/RARRES2 suggesting a role for this receptor in the regulation of inflammation and energy homesotasis. Signals mainly via beta-arrestin pathway. Binding of RARRES2 activates weakly G proteins, calcium mobilization and MAPK1/MAPK3 (ERK1/2) phosphorylation too. Acts also as a receptor for TAFA1, mediates its effects on neuronal stem-cell proliferation and differentiation via the activation of ROCK/ERK and ROCK/STAT3 signaling pathway. This chain is Chemerin-like receptor 2 (Cmklr2), found in Rattus norvegicus (Rat).